We begin with the raw amino-acid sequence, 432 residues long: 5'-deoxyadenosine deaminase (432 aa).

2 residues coordinate Zn(2+): H63 and H65. Substrate is bound by residues E92 and H184. H211 is a Zn(2+) binding site. Substrate contacts are provided by E214 and D299. D299 lines the Zn(2+) pocket.

This sequence belongs to the metallo-dependent hydrolases superfamily. MTA/SAH deaminase family. As to quaternary structure, homotetramer. The cofactor is Zn(2+).

The enzyme catalyses 5'-deoxyadenosine + H2O + H(+) = 5'-deoxyinosine + NH4(+). It catalyses the reaction S-adenosyl-L-homocysteine + H2O + H(+) = S-inosyl-L-homocysteine + NH4(+). The catalysed reaction is S-methyl-5'-thioadenosine + H2O + H(+) = S-methyl-5'-thioinosine + NH4(+). It carries out the reaction adenosine + H2O + H(+) = inosine + NH4(+). The protein operates within amino-acid biosynthesis; S-adenosyl-L-methionine biosynthesis. Functionally, catalyzes the deamination of three SAM-derived enzymatic products, namely 5'-deoxyadenosine, S-adenosyl-L-homocysteine, and 5'-methylthioadenosine, to produce the inosine analogs. Can also deaminate adenosine. The preferred substrate for this enzyme is 5'-deoxyadenosine, but all these substrates are efficiently deaminated. Likely functions in a S-adenosyl-L-methionine (SAM) recycling pathway from S-adenosyl-L-homocysteine (SAH) produced from SAM-dependent methylation reactions. May also be involved in the recycling of 5'-deoxyadenosine, whereupon the 5'-deoxyribose moiety of 5'-deoxyinosine is further metabolized to deoxyhexoses used for the biosynthesis of aromatic amino acids in methanogens. This Methanosarcina acetivorans (strain ATCC 35395 / DSM 2834 / JCM 12185 / C2A) protein is 5'-deoxyadenosine deaminase.